Consider the following 1229-residue polypeptide: ABC transporter B family member 22 (1229 aa).

A run of 6 helical transmembrane segments spans residues 22-42, 69-89, 145-167, 171-193, 251-271, and 274-294; these read MGLG…IFFI, VALL…GYCW, LPNF…IMLW, IVGF…ALIN, GIAI…TWYG, and MVMY…CITY. The region spanning 22–311 is the ABC transmembrane type-1 1 domain; sequence MGLGLIGAVG…GLSNLKYFSE (290 aa). Residues 346 to 582 enclose the ABC transporter 1 domain; that stretch reads VQFKHVKFMY…VDGQYTSLVR (237 aa). ATP is bound at residue 381–388; that stretch reads GGSGSGKS. N529 and N594 each carry an N-linked (GlcNAc...) asparagine glycan. 2 helical membrane-spanning segments follow: residues 661 to 681 and 703 to 723; these read ALYG…YAYA and IYVL…IIQQ. One can recognise an ABC transmembrane type-1 2 domain in the interval 661–949; sequence ALYGCLSAVL…AGAMTMDLAK (289 aa). N758 is a glycosylation site (N-linked (GlcNAc...) asparagine). Transmembrane regions (helical) follow at residues 782–800, 807–823, 885–908, and 923–943; these read VSLL…TLGL, SIVM…CFYT, WLAG…NYWY, and FFEL…AGAM. The 239-residue stretch at 984–1222 folds into the ABC transporter 2 domain; that stretch reads IKFVNVDFAY…GPTGVYFSLV (239 aa). N1004 carries an N-linked (GlcNAc...) asparagine glycan. 1019-1026 lines the ATP pocket; it reads GPSGSGKS. N1157 is a glycosylation site (N-linked (GlcNAc...) asparagine).

This sequence belongs to the ABC transporter superfamily. ABCB family. Multidrug resistance exporter (TC 3.A.1.201) subfamily.

The protein resides in the membrane. The chain is ABC transporter B family member 22 (ABCB22) from Arabidopsis thaliana (Mouse-ear cress).